A 318-amino-acid polypeptide reads, in one-letter code: Ubiquinone biosynthesis protein COQ9, mitochondrial (318 aa).

The N-terminal 44 residues, 1–44 (MAAAAVSGALGRAGWRLLQLRCLPVARCRQALVPRAFHASAVGL), are a transit peptide targeting the mitochondrion. Positions 16-31 (RLLQLRCLPVARCRQA) match the SIFI-degron motif. Positions 44–98 (LRSSDEQKQQPPNSFSQQHSETQGAEKPDPESSHSPPRYTDQGGEEEEDYESEEQ) are disordered. The span at 52 to 66 (QQPPNSFSQQHSETQ) shows a compositional bias: polar residues. The span at 86-97 (GGEEEEDYESEE) shows a compositional bias: acidic residues. Residue Lys-175 is modified to N6-acetyllysine. Arg-244 is an a 1,2-diacylglycero-3-phosphoethanolamine binding site.

It belongs to the COQ9 family. Homodimer. Heterodimer; two heterodimers of COQ7:COQ9 come together on the same side of the lipid pseudo-bilayer and form a curved tetramer with a hydrophobic surface suitable for membrane interaction. These two tetramers assemble into a soluble octamer with a pseudo-bilayer of lipids captured within. Interacts with COQ7; this interaction allows ubiquinone (CoQ) isoprene intermediates presentation to COQ7 and facilitates the COQ7-mediated hydroxylase step. Post-translationally, in response to mitochondrial stress, the precursor protein is ubiquitinated by the SIFI complex in the cytoplasm before mitochondrial import, leading to its degradation. Within the SIFI complex, UBR4 initiates ubiquitin chain that are further elongated or branched by KCMF1.

The protein localises to the mitochondrion. It participates in cofactor biosynthesis; ubiquinone biosynthesis. Its function is as follows. Membrane-associated protein that warps the membrane surface to access and bind aromatic isoprenes with high specificity, including ubiquinone (CoQ) isoprene intermediates and presents them directly to COQ7, therefore facilitating the COQ7-mediated hydroxylase step. Participates in the biosynthesis of coenzyme Q, also named ubiquinone, an essential lipid-soluble electron transporter for aerobic cellular respiration. The polypeptide is Ubiquinone biosynthesis protein COQ9, mitochondrial (Homo sapiens (Human)).